We begin with the raw amino-acid sequence, 166 residues long: Putative transcriptional regulatory protein for hcr operon (166 aa).

The 155-residue stretch at 1 to 155 (MRKHRGKPAN…LIGLLKRLYR (155 aa)) folds into the HTH marR-type domain.

Its function is as follows. May be involved in the regulation of genes for 4-hydroxybenzoyl-CoA reductase. The polypeptide is Putative transcriptional regulatory protein for hcr operon (Thauera aromatica).